A 93-amino-acid chain; its full sequence is Small ribosomal subunit protein uS19 (93 aa).

The protein belongs to the universal ribosomal protein uS19 family.

Functionally, protein S19 forms a complex with S13 that binds strongly to the 16S ribosomal RNA. The chain is Small ribosomal subunit protein uS19 from Saccharopolyspora erythraea (strain ATCC 11635 / DSM 40517 / JCM 4748 / NBRC 13426 / NCIMB 8594 / NRRL 2338).